A 356-amino-acid chain; its full sequence is Probable arabinogalactan endo-beta-1,4-galactanase A (356 aa).

An N-terminal signal peptide occupies residues 1–21 (MLGKMILLPLFVLLCHSLASA). An N-linked (GlcNAc...) asparagine glycan is attached at Asn-133. The Proton donor role is filled by Glu-157. The active-site Nucleophile is the Glu-268.

It belongs to the glycosyl hydrolase 53 family.

The protein localises to the secreted. It catalyses the reaction The enzyme specifically hydrolyzes (1-&gt;4)-beta-D-galactosidic linkages in type I arabinogalactans.. Functionally, endogalactanase involved in the degradation of plant cell wall polysaccharides, and more particularly of hairy regions of pectin. The chain is Probable arabinogalactan endo-beta-1,4-galactanase A (galA) from Neosartorya fischeri (strain ATCC 1020 / DSM 3700 / CBS 544.65 / FGSC A1164 / JCM 1740 / NRRL 181 / WB 181) (Aspergillus fischerianus).